A 61-amino-acid chain; its full sequence is Small ribosomal subunit protein uS14 (61 aa).

The Zn(2+) site is built by cysteine 24, cysteine 27, cysteine 40, and cysteine 43.

It belongs to the universal ribosomal protein uS14 family. Zinc-binding uS14 subfamily. As to quaternary structure, part of the 30S ribosomal subunit. Contacts proteins S3 and S10. The cofactor is Zn(2+).

Functionally, binds 16S rRNA, required for the assembly of 30S particles and may also be responsible for determining the conformation of the 16S rRNA at the A site. The polypeptide is Small ribosomal subunit protein uS14 (Desulfovibrio desulfuricans (strain ATCC 27774 / DSM 6949 / MB)).